We begin with the raw amino-acid sequence, 261 residues long: Uridine-cytidine kinase 2-B (261 aa).

29 to 37 (GGTASGKSS) lines the ATP pocket. Asp86, Tyr114, His119, Arg168, Arg178, and Gln186 together coordinate substrate. Residue Asp215 participates in ATP binding. The disordered stretch occupies residues 238–261 (RQNGFQNGHGTPRQRRTSESSRPH).

Belongs to the uridine kinase family. In terms of assembly, homotetramer.

It carries out the reaction uridine + ATP = UMP + ADP + H(+). The enzyme catalyses cytidine + ATP = CMP + ADP + H(+). Its pathway is pyrimidine metabolism; CTP biosynthesis via salvage pathway; CTP from cytidine: step 1/3. It functions in the pathway pyrimidine metabolism; UMP biosynthesis via salvage pathway; UMP from uridine: step 1/1. Phosphorylates uridine and cytidine to uridine monophosphate and cytidine monophosphate. Does not phosphorylate deoxyribonucleosides or purine ribonucleosides. Can use ATP or GTP as a phosphate donor. The polypeptide is Uridine-cytidine kinase 2-B (uck2b) (Danio rerio (Zebrafish)).